Consider the following 36-residue polypeptide: Photosystem I reaction center subunit VIII (36 aa).

A helical transmembrane segment spans residues 6 to 28; it reads LPSIFVPLVGLMFPAIAMASLSL.

The protein belongs to the PsaI family.

It localises to the plastid. Its subcellular location is the chloroplast thylakoid membrane. In terms of biological role, may help in the organization of the PsaL subunit. This is Photosystem I reaction center subunit VIII from Calycanthus floridus var. glaucus (Eastern sweetshrub).